The following is a 288-amino-acid chain: Fatty acid-binding protein TM_1468 (288 aa).

The DegV domain occupies 3 to 283 (VKILVDSTAD…PGTVGFGIEV (281 aa)). Residues Thr63 and Ser96 each coordinate hexadecanoate.

Monomer.

Its function is as follows. Binds long-chain fatty acids, such as palmitate, and may play a role in lipid transport or fatty acid metabolism. This Thermotoga maritima (strain ATCC 43589 / DSM 3109 / JCM 10099 / NBRC 100826 / MSB8) protein is Fatty acid-binding protein TM_1468.